A 244-amino-acid chain; its full sequence is Large ribosomal subunit protein uL3 (244 aa).

A disordered region spans residues 215–244 (KKPPRERRGFAGSSTVDPLKASKRAVAKKK). Over residues 235-244 (ASKRAVAKKK) the composition is skewed to basic residues.

The protein belongs to the universal ribosomal protein uL3 family. As to quaternary structure, part of the 50S ribosomal subunit. Forms a cluster with proteins L14 and L19.

One of the primary rRNA binding proteins, it binds directly near the 3'-end of the 23S rRNA, where it nucleates assembly of the 50S subunit. The sequence is that of Large ribosomal subunit protein uL3 from Koribacter versatilis (strain Ellin345).